The primary structure comprises 339 residues: Glycerol-3-phosphate dehydrogenase [NAD(P)+] (339 aa).

NADPH-binding residues include Ser11, Trp12, and Lys109. Residues Lys109, Gly140, and Ser142 each contribute to the sn-glycerol 3-phosphate site. Position 144 (Ala144) interacts with NADPH. Lys195, Asp249, Ser259, Arg260, and Asn261 together coordinate sn-glycerol 3-phosphate. The active-site Proton acceptor is Lys195. Arg260 provides a ligand contact to NADPH. Positions 284 and 286 each coordinate NADPH.

The protein belongs to the NAD-dependent glycerol-3-phosphate dehydrogenase family.

It is found in the cytoplasm. It catalyses the reaction sn-glycerol 3-phosphate + NAD(+) = dihydroxyacetone phosphate + NADH + H(+). The enzyme catalyses sn-glycerol 3-phosphate + NADP(+) = dihydroxyacetone phosphate + NADPH + H(+). Its pathway is membrane lipid metabolism; glycerophospholipid metabolism. Catalyzes the reduction of the glycolytic intermediate dihydroxyacetone phosphate (DHAP) to sn-glycerol 3-phosphate (G3P), the key precursor for phospholipid synthesis. This chain is Glycerol-3-phosphate dehydrogenase [NAD(P)+], found in Lactobacillus acidophilus (strain ATCC 700396 / NCK56 / N2 / NCFM).